The chain runs to 191 residues: Fe/S biogenesis protein NfuA (191 aa).

2 residues coordinate [4Fe-4S] cluster: cysteine 149 and cysteine 152.

This sequence belongs to the NfuA family. In terms of assembly, homodimer. It depends on [4Fe-4S] cluster as a cofactor.

Its function is as follows. Involved in iron-sulfur cluster biogenesis. Binds a 4Fe-4S cluster, can transfer this cluster to apoproteins, and thereby intervenes in the maturation of Fe/S proteins. Could also act as a scaffold/chaperone for damaged Fe/S proteins. This chain is Fe/S biogenesis protein NfuA, found in Salmonella typhi.